The primary structure comprises 417 residues: MDKLKISANGPLNGEITVSGAKNAALPLMCAGLLTSGTLRLKNVPMLADVKTTQKLLQGMGARVLTDNISEFEINGGTVNNTCAPYELVRTMRASILVLGPTLARFGEAQVSLPGGCAIGSRPVDQHLKGLEAMGAEIVIEHGYVKAKGKLKGTRVAMDVVTVGGTENLLMAATLAEGTTVLENCAIEPEVVDLAECLVKMGAKISGIGTSTMIVEGVDELHGCEHSVVPDRIEAGTFLCAVAITGGRVVLRNAAPKTMEVVLDKLVEAGAVIEAGDDWIAIDMRQRPKAVDIRTVVHPGFPTDMQAQFMALNAVAEGSCRVVETIFENRFMHVPELNRMGANITTEGNTAFVQGVERLSGAVVKATDLRASASLVIAGLAARGETVVEQIYHLDRGYENIEKKLGSVGAKIERVSG.

22-23 (KN) contributes to the phosphoenolpyruvate binding site. R93 contributes to the UDP-N-acetyl-alpha-D-glucosamine binding site. C117 serves as the catalytic Proton donor. C117 is modified (2-(S-cysteinyl)pyruvic acid O-phosphothioketal). Residues 122–126 (RPVDQ), D304, and I326 each bind UDP-N-acetyl-alpha-D-glucosamine.

This sequence belongs to the EPSP synthase family. MurA subfamily.

It localises to the cytoplasm. The catalysed reaction is phosphoenolpyruvate + UDP-N-acetyl-alpha-D-glucosamine = UDP-N-acetyl-3-O-(1-carboxyvinyl)-alpha-D-glucosamine + phosphate. Its pathway is cell wall biogenesis; peptidoglycan biosynthesis. Its function is as follows. Cell wall formation. Adds enolpyruvyl to UDP-N-acetylglucosamine. This chain is UDP-N-acetylglucosamine 1-carboxyvinyltransferase, found in Neisseria meningitidis serogroup A / serotype 4A (strain DSM 15465 / Z2491).